A 362-amino-acid chain; its full sequence is Adenosine deaminase (362 aa).

2 residues coordinate Zn(2+): H19 and H21. Residues H21, D23, and G181 each coordinate substrate. A Zn(2+)-binding site is contributed by H208. Catalysis depends on E211, which acts as the Proton donor. D300 contributes to the Zn(2+) binding site.

Belongs to the metallo-dependent hydrolases superfamily. Adenosine and AMP deaminases family. Adenosine deaminase subfamily. The cofactor is Zn(2+).

The enzyme catalyses adenosine + H2O + H(+) = inosine + NH4(+). It carries out the reaction 2'-deoxyadenosine + H2O + H(+) = 2'-deoxyinosine + NH4(+). Its function is as follows. Catalyzes the hydrolytic deamination of adenosine and 2-deoxyadenosine. This Mycolicibacterium gilvum (strain PYR-GCK) (Mycobacterium gilvum (strain PYR-GCK)) protein is Adenosine deaminase.